Reading from the N-terminus, the 235-residue chain is Segregation and condensation protein A (235 aa).

Belongs to the ScpA family. In terms of assembly, component of a cohesin-like complex composed of ScpA, ScpB and the Smc homodimer, in which ScpA and ScpB bind to the head domain of Smc. The presence of the three proteins is required for the association of the complex with DNA.

It is found in the cytoplasm. Its function is as follows. Participates in chromosomal partition during cell division. May act via the formation of a condensin-like complex containing Smc and ScpB that pull DNA away from mid-cell into both cell halves. The protein is Segregation and condensation protein A of Streptococcus agalactiae serotype III (strain NEM316).